The chain runs to 101 residues: Urease subunit beta (101 aa).

This sequence belongs to the urease beta subunit family. As to quaternary structure, heterotrimer of UreA (gamma), UreB (beta) and UreC (alpha) subunits. Three heterotrimers associate to form the active enzyme.

Its subcellular location is the cytoplasm. The catalysed reaction is urea + 2 H2O + H(+) = hydrogencarbonate + 2 NH4(+). Its pathway is nitrogen metabolism; urea degradation; CO(2) and NH(3) from urea (urease route): step 1/1. This is Urease subunit beta from Burkholderia ambifaria (strain MC40-6).